The chain runs to 98 residues: NADH-ubiquinone oxidoreductase chain 4L (98 aa).

The next 3 membrane-spanning stretches (helical) occupy residues 2 to 22, 29 to 49, and 61 to 81; these read PPIFANIILAFATAFLGTLIF, SLLCLEGMMLSMFILSTLIIL, and ILLLVFAACEAAIGLALLVMV.

The protein belongs to the complex I subunit 4L family. As to quaternary structure, core subunit of respiratory chain NADH dehydrogenase (Complex I) which is composed of 45 different subunits.

The protein resides in the mitochondrion inner membrane. The catalysed reaction is a ubiquinone + NADH + 5 H(+)(in) = a ubiquinol + NAD(+) + 4 H(+)(out). Functionally, core subunit of the mitochondrial membrane respiratory chain NADH dehydrogenase (Complex I) which catalyzes electron transfer from NADH through the respiratory chain, using ubiquinone as an electron acceptor. Part of the enzyme membrane arm which is embedded in the lipid bilayer and involved in proton translocation. The protein is NADH-ubiquinone oxidoreductase chain 4L (MT-ND4L) of Avahi unicolor (Sambirano woolly lemur).